The sequence spans 312 residues: Aspartate carbamoyltransferase catalytic subunit (312 aa).

Carbamoyl phosphate contacts are provided by arginine 54 and threonine 55. Residue lysine 83 coordinates L-aspartate. Residues arginine 104, histidine 132, and glutamine 135 each coordinate carbamoyl phosphate. The L-aspartate site is built by arginine 165 and arginine 226. Carbamoyl phosphate contacts are provided by leucine 263 and proline 264.

It belongs to the aspartate/ornithine carbamoyltransferase superfamily. ATCase family. Heterooligomer of catalytic and regulatory chains.

It carries out the reaction carbamoyl phosphate + L-aspartate = N-carbamoyl-L-aspartate + phosphate + H(+). The protein operates within pyrimidine metabolism; UMP biosynthesis via de novo pathway; (S)-dihydroorotate from bicarbonate: step 2/3. Its function is as follows. Catalyzes the condensation of carbamoyl phosphate and aspartate to form carbamoyl aspartate and inorganic phosphate, the committed step in the de novo pyrimidine nucleotide biosynthesis pathway. The protein is Aspartate carbamoyltransferase catalytic subunit of Methanothermobacter thermautotrophicus (strain ATCC 29096 / DSM 1053 / JCM 10044 / NBRC 100330 / Delta H) (Methanobacterium thermoautotrophicum).